The following is a 533-amino-acid chain: Probable protein kinase UbiB (533 aa).

A helical membrane pass occupies residues 24 to 44; that stretch reads LILELPMLPWWLRLLGATLPW. One can recognise a Protein kinase domain in the interval 126 to 494; sequence RFEREPLASA…WKGSRHDWLG (369 aa). ATP contacts are provided by residues 132–140 and K154; that span reads LASASVAQV. D289 serves as the catalytic Proton acceptor. The chain crosses the membrane as a helical span at residues 510–530; it reads LGQQLEAWPAWVMLAGGVFLI.

Belongs to the ABC1 family. UbiB subfamily.

Its subcellular location is the cell inner membrane. Its pathway is cofactor biosynthesis; ubiquinone biosynthesis [regulation]. Functionally, is probably a protein kinase regulator of UbiI activity which is involved in aerobic coenzyme Q (ubiquinone) biosynthesis. The protein is Probable protein kinase UbiB of Pseudomonas aeruginosa (strain ATCC 15692 / DSM 22644 / CIP 104116 / JCM 14847 / LMG 12228 / 1C / PRS 101 / PAO1).